Here is a 172-residue protein sequence, read N- to C-terminus: Small ribosomal subunit protein uS5 (172 aa).

One can recognise an S5 DRBM domain in the interval Leu-17–Val-80.

This sequence belongs to the universal ribosomal protein uS5 family. In terms of assembly, part of the 30S ribosomal subunit. Contacts proteins S4 and S8.

With S4 and S12 plays an important role in translational accuracy. Its function is as follows. Located at the back of the 30S subunit body where it stabilizes the conformation of the head with respect to the body. This is Small ribosomal subunit protein uS5 from Cupriavidus pinatubonensis (strain JMP 134 / LMG 1197) (Cupriavidus necator (strain JMP 134)).